The chain runs to 129 residues: Lysozyme C (129 aa).

Positions 1–129 (KVYGRCELAA…VHAWIRGCRL (129 aa)) constitute a C-type lysozyme domain. Cystine bridges form between C6–C127, C30–C115, C64–C80, and C76–C94. Residues E35 and D52 contribute to the active site.

Belongs to the glycosyl hydrolase 22 family. In terms of assembly, monomer.

Its subcellular location is the secreted. The catalysed reaction is Hydrolysis of (1-&gt;4)-beta-linkages between N-acetylmuramic acid and N-acetyl-D-glucosamine residues in a peptidoglycan and between N-acetyl-D-glucosamine residues in chitodextrins.. Its function is as follows. Lysozymes have primarily a bacteriolytic function; those in tissues and body fluids are associated with the monocyte-macrophage system and enhance the activity of immunoagents. The chain is Lysozyme C (LYZ) from Pavo cristatus (Indian peafowl).